A 552-amino-acid polypeptide reads, in one-letter code: Phosphoglucomutase (552 aa).

Serine 143 functions as the Phosphoserine intermediate in the catalytic mechanism. Residues serine 143, aspartate 295, aspartate 297, and aspartate 299 each coordinate Mg(2+).

The protein belongs to the phosphohexose mutase family. Requires Mg(2+) as cofactor.

It carries out the reaction alpha-D-glucose 1-phosphate = alpha-D-glucose 6-phosphate. It participates in glycolipid metabolism; diglucosyl-diacylglycerol biosynthesis. In terms of biological role, catalyzes the interconversion between glucose-6-phosphate and alpha-glucose-1-phosphate. This is the first step in the biosynthesis of diglucosyl-diacylglycerol (Glc2-DAG), i.e. the predominant glycolipid found in the S.aureus membrane, which is also used as a membrane anchor for lipoteichoic acid (LTA). In Staphylococcus aureus (strain bovine RF122 / ET3-1), this protein is Phosphoglucomutase (pgcA).